The sequence spans 256 residues: Rhamnolipids biosynthesis 3-oxoacyl-[acyl-carrier-protein] reductase (256 aa).

Residue 14-38 coordinates NADP(+); that stretch reads VTGGSRGIGQMIAQGLLEAGARVFI. Residue S148 coordinates substrate. The active-site Proton acceptor is the Y162.

This sequence belongs to the short-chain dehydrogenases/reductases (SDR) family.

The enzyme catalyses a (3R)-hydroxyacyl-[ACP] + NADP(+) = a 3-oxoacyl-[ACP] + NADPH + H(+). Its pathway is lipid metabolism; rhamnolipid biosynthesis. Required for the synthesis of the beta-hydroxy acid moiety of rhamnolipids. The sequence is that of Rhamnolipids biosynthesis 3-oxoacyl-[acyl-carrier-protein] reductase (rhlG) from Pseudomonas aeruginosa (strain ATCC 15692 / DSM 22644 / CIP 104116 / JCM 14847 / LMG 12228 / 1C / PRS 101 / PAO1).